Consider the following 457-residue polypeptide: Solute carrier family 38 member 6 (457 aa).

Methionine 1 carries the post-translational modification N-acetylmethionine. A phosphoserine mark is found at serine 4 and serine 7. 5 helical membrane passes run phenylalanine 48–alanine 68, valine 70–alanine 90, leucine 112–glutamine 132, leucine 171–phenylalanine 191, and leucine 192–isoleucine 212. Cysteines 219 and 239 form a disulfide. A glycan (N-linked (GlcNAc...) asparagine) is linked at asparagine 234. Residues valine 251 to tyrosine 271 form a helical membrane-spanning segment. N-linked (GlcNAc...) asparagine glycosylation occurs at asparagine 284. A run of 5 helical transmembrane segments spans residues alanine 289 to tyrosine 309, alanine 328 to isoleucine 348, serine 372 to isoleucine 392, valine 395 to phenylalanine 415, and alanine 432 to leucine 452.

It belongs to the amino acid/polyamine transporter 2 family.

The protein localises to the cell membrane. It is found in the synapse. It catalyses the reaction L-glutamine(out) = L-glutamine(in). It carries out the reaction L-glutamate(out) = L-glutamate(in). Its function is as follows. Amino acid transporter with an apparent selectivity for L-glutamine and L-glutamate. May facilitate glutamine uptake in excitatory neurons. The transport mechanism remains to be elucidated. This chain is Solute carrier family 38 member 6, found in Rattus norvegicus (Rat).